The following is a 495-amino-acid chain: Trigger factor (495 aa).

A PPIase FKBP-type domain is found at 162–243 (DDFVSIDLSA…VKSLKERELP (82 aa)). Basic and acidic residues predominate over residues 425–437 (DTDGNEIDPKEYF). Residues 425 to 495 (DTDGNEIDPK…TDDDSENAEK (71 aa)) are disordered. The segment covering 450 to 461 (SADAEASENSEA) has biased composition (low complexity). Acidic residues predominate over residues 486–495 (TDDDSENAEK).

Belongs to the FKBP-type PPIase family. Tig subfamily.

It localises to the cytoplasm. It catalyses the reaction [protein]-peptidylproline (omega=180) = [protein]-peptidylproline (omega=0). In terms of biological role, involved in protein export. Acts as a chaperone by maintaining the newly synthesized protein in an open conformation. Functions as a peptidyl-prolyl cis-trans isomerase. The chain is Trigger factor from Corynebacterium kroppenstedtii (strain DSM 44385 / JCM 11950 / CIP 105744 / CCUG 35717).